The sequence spans 677 residues: MAKVNITRDLIRRQIKERGALSFERRYHVTDPFIRRLGLEAELQGHSGCVNCLEWNEKGDLLASGSDDQHTIVWDPLHHKKLLSMHTGHTANIFSVKFLPHAGDRILITGAADSKVHVHDLTVKETIHMFGDHTNRVKRIATAPMWPNTFWSAAEDGLIRQYDLRENSKHSEVLIDLTEYCGQLVEAKCLTVNPQDNNCLAVGASGPFVRLYDIRMIHNHRKSMKQSPSAGVHTFCDRQKPLPDGAAQYYVAGHLPVKLPDYNNRLRVLVATYVTFSPNGTELLVNMGGEQVYLFDLTYKQRPYTFLLPRKCHSSGEVQNGKMSTNGVSNGVSNGLHLHSNGFRLPESRGHVSPQVELPPYLERVKQQANEAFACQQWTQAIQLYSKAVQRAPHNAMLYGNRAAAYMKRKWDGDHYDALRDCLKAISLNPCHLKAHFRLARCLFELKYVAEALECLDDFKGKFPEQAHSSACDALGRDITAALFSKNDGEEKKGPGGGAPVRLRSTSRKDSISEDEMVLRERSYDYQFRYCGHCNTTTDIKEANFFGSNAQYIVSGSDDGSFFIWEKETTNLVRVLQGDESIVNCLQPHPSYCFLATSGIDPVVRLWNPRPESEDLTGRVVEDMEGASQANQRRMNADPLEVMLLNMGYRITGLSSGGAGASDDEDSSEGQVQCRPS.

WD repeat units lie at residues 45-84 (GHSGCVNCLEWNEKGDLLASGSDDQHTIVWDPLHHKKLLS), 88-129 (GHTA…TIHM), 132-172 (DHTN…KHSE), 182-222 (GQLV…NHRK), and 265-305 (RLRV…RPYT). Ser-353 bears the Phosphoserine mark. 2 TPR repeats span residues 362–395 (LERVKQQANEAFACQQWTQAIQLYSKAVQRAPHN) and 397–432 (MLYGNRAAAYMKRKWDGDHYDALRDCLKAISLNPCH). Residues 487 to 509 (NDGEEKKGPGGGAPVRLRSTSRK) are disordered. Ser-511 carries the post-translational modification Phosphoserine. WD repeat units follow at residues 535-575 (NTTT…LVRV) and 578-617 (GDESIVNCLQPHPSYCFLATSGIDPVVRLWNPRPESEDLT). A disordered region spans residues 655–677 (SSGGAGASDDEDSSEGQVQCRPS).

It participates in protein modification; protein ubiquitination. Its function is as follows. May function as a substrate receptor for CUL4-DDB1 E3 ubiquitin-protein ligase complex. The polypeptide is WD and tetratricopeptide repeats protein 1 (WDTC1) (Homo sapiens (Human)).